A 581-amino-acid polypeptide reads, in one-letter code: Rhodanese-like domain-containing protein 6 (581 aa).

The 101-residue stretch at 158-258 (ENKELVLLDA…YLEQFPSGGF (101 aa)) folds into the Rhodanese domain. Catalysis depends on Cys216, which acts as the Cysteine persulfide intermediate.

The protein is Rhodanese-like domain-containing protein 6 (STR6) of Arabidopsis thaliana (Mouse-ear cress).